The primary structure comprises 427 residues: Endothelin-1 receptor (427 aa).

The first 20 residues, 1 to 20 (MSIFCLAAYFWLTMVGGVMA), serve as a signal peptide directing secretion. Topologically, residues 21-80 (DNPERYSANLSSHMEDFTPFPGTEINFLGTTHRPPNLALPSNGSMHGYCPQQTKITTAFK) are extracellular. 2 N-linked (GlcNAc...) asparagine glycosylation sites follow: Asn-29 and Asn-62. Residues 81–102 (YINTVISCTIFIVGMVGNATLL) traverse the membrane as a helical segment. The Cytoplasmic segment spans residues 103-112 (RIIYQNKCMR). A helical membrane pass occupies residues 113–132 (NGPNALIASLALGDLIYVVI). Residues 133–159 (DLPINVFKLLAGRWPFDHNDFGVFLCK) are Extracellular-facing. Cys-158 and Cys-239 are oxidised to a cystine. Residues 160-181 (LFPFLQKSSVGITVLNLCALSV) form a helical membrane-spanning segment. At 182-205 (DRYRAVASWSRVQGIGIPLITAIE) the chain is on the cytoplasmic side. The helical transmembrane segment at 206-229 (IVSIWILSFILAIPEAIGFVMVPF) threads the bilayer. The Extracellular portion of the chain corresponds to 230–256 (EYKGELHRTCMLNATSKFMEFYQDVKD). Asn-242 carries N-linked (GlcNAc...) asparagine glycosylation. Residues 257 to 278 (WWLFGFYFCMPLVCTAIFYTLM) traverse the membrane as a helical segment. Topologically, residues 279–306 (TCEMLNRRNGSLRIALSEHLKQRREVAK) are cytoplasmic. Residues 307–328 (TVFCLVVIFALCWFPLHLSRIL) traverse the membrane as a helical segment. Residues 329–347 (KKTVYDEMDKNRCELLSFL) lie on the Extracellular side of the membrane. The chain crosses the membrane as a helical span at residues 348 to 372 (LLMDYIGINLATMNSCINPIALYFV). The Cytoplasmic portion of the chain corresponds to 373–427 (SKKFKNCFQSCLCCCCHQSKSLMTSVPMNGTSIQWKNQEQNNHNTERSSHKDSMN). Residues 408–427 (KNQEQNNHNTERSSHKDSMN) form a disordered region. Basic and acidic residues predominate over residues 416 to 427 (NTERSSHKDSMN). At Ser-425 the chain carries Phosphoserine.

The protein belongs to the G-protein coupled receptor 1 family. Endothelin receptor subfamily. EDNRA sub-subfamily. As to quaternary structure, interacts with HDAC7 and KAT5.

Its subcellular location is the cell membrane. Its function is as follows. Receptor for endothelin-1. Mediates its action by association with G proteins that activate a phosphatidylinositol-calcium second messenger system. The rank order of binding affinities for ET-A is: ET1 &gt; ET2 &gt;&gt; ET3. This Mus musculus (Mouse) protein is Endothelin-1 receptor.